We begin with the raw amino-acid sequence, 6781 residues long: Replicase polyprotein 1ab (6781 aa).

One can recognise a CoV Nsp1 globular domain in the interval 2 to 109 (ASNHVTLAFA…ELELTFGRRG (108 aa)). E59, N95, E99, and E102 together coordinate ssDNA. The CoV Nsp2 N-terminal domain maps to 112 to 364 (IVPVDQYMCG…TKLKFDILSG (253 aa)). A CoV Nsp2 middle domain is found at 383-776 (SALVDIVDDA…AEMYNTYLST (394 aa)). Residues 778 to 895 (VENLVLAGVS…VPICFKKKGG (118 aa)) form the CoV Nsp2 C-terminal domain. The Ubiquitin-like 1 domain occupies 896–991 (GDVKFSDEVS…VMVSQWPLND (96 aa)). The tract at residues 1009-1040 (IDSEGDEVDSSAPEKVADVANSEPGDDGLPVA) is disordered. Positions 1057-1296 (SFIKDTPSTV…EPVVKPFYSY (240 aa)) constitute a Peptidase C16 1 domain. Residue C1091 is the For PL1-PRO activity of the active site. A C4-type 1; degenerate zinc finger spans residues 1162-1193 (CGCGTGERIYEGCAFRMTPTLEPFPYGACAQC). Residues H1239 and D1252 each act as for PL1-PRO activity in the active site. One can recognise a Macro domain in the interval 1297–1465 (KNVDFYQGDF…IFKEALVDTT (169 aa)). Positions 1630–1685 (NKSVVIKVTEDTRSVKAVKVESTATYGQQIGPCLVNDTVVTDNKPVVADVVAKVVP) constitute a Ubiquitin-like 2 domain. The region spanning 1691-1951 (SHYGFDKAGE…LLDTMNYASE (261 aa)) is the Peptidase C16 2 domain. Catalysis depends on C1729, which acts as the For PL2-PRO activity. Residues 1808 to 1838 (DGCCCSKRVVTAPVVNASVLKLGVEDGLCPH) form a C4-type 2; degenerate zinc finger. Active-site for PL2-PRO activity residues include H1888 and D1901. The next 2 helical transmembrane spans lie at 1959–1979 (FMSR…GLCF) and 2022–2042 (WFKV…LLFM). The segment at 1959 to 2170 (FMSRNLITVF…FGDEIVVFFI (212 aa)) is HD1. In terms of domain architecture, 3Ecto spans 2038 to 2102 (ALLFMTIRFT…TQVVWQHLRD (65 aa)). Intrachain disulfides connect C2054–C2080 and C2072–C2077. A run of 3 helical transmembrane segments spans residues 2105–2125 (IGNV…GVYV), 2127–2147 (AITL…LGLQ), and 2150–2170 (IWFL…VFFI). The interval 2176–2266 (MFIKHVCLGC…VVKLNVQPTG (91 aa)) is Y1. Positions 2176–2516 (MFIKHVCLGC…PTVCIANKKG (341 aa)) constitute a CoV Nsp3 Y domain. Zn(2+) is bound by residues H2180, C2185, C2190, C2193, C2226, H2229, C2233, and C2236. The tract at residues 2180–2193 (HVCLGCDKASCVAC) is ZF1. Positions 2226–2236 (CKKHNFFCLNC) are ZF2. The tract at residues 2267–2356 (PATILIDKVE…LVDSALLASL (90 aa)) is Y2. The segment at 2267 to 2516 (PATILIDKVE…PTVCIANKKG (250 aa)) is coV-Y. Residues 2357–2414 (SVDFGASLHSAFVSVLSNSFGKDLSSCNDMQDCKSTLGFDDVPLDTFNAAVAEAHRYD) form a Y3 region. Positions 2415-2516 (VLLTDMSFNN…PTVCIANKKG (102 aa)) are Y4. Helical transmembrane passes span 2528–2548 (FFWF…FLDF), 2619–2639 (IPAG…TIFG), 2654–2674 (GACI…TAVY), 2754–2774 (GSDF…ISVF), 2787–2807 (ILFN…FTKF), 2814–2834 (MSVG…SYIV), and 2863–2883 (LGFL…VYAF). The segment at 2528–2883 (FFWFLCLFIV…PWWVLMVYAF (356 aa)) is HD2. A Nsp4C domain is found at 2902–2997 (LFEGDKFVGS…PTVSYNSTLQ (96 aa)). A Peptidase C30 domain is found at 2998-3299 (AGLRKMAQPS…VRQMYGVNLQ (302 aa)). Residues H3038 and C3141 each act as for 3CL-PRO activity in the active site. 7 helical membrane-spanning segments follow: residues 3336–3356 (GYVT…MFTL), 3361–3381 (LFFQ…NLAF), 3399–3419 (LMGF…VTIL), 3431–3451 (PASS…YFYA), 3454–3474 (ILSC…VGAV), 3476–3496 (YKVA…FGDI), and 3500–3520 (MFCY…LYWF). An HD3 region spans residues 3336 to 3520 (GYVTPMFACL…CCFYGILYWF (185 aa)). Residues 3580 to 3662 (SKLTDIKCSN…SYFNDNSMLQ (83 aa)) form the RdRp Nsp7 cofactor domain. Positions 3663–3857 (SVASTYVGLP…LGCERIVKLQ (195 aa)) constitute a RdRp Nsp8 cofactor domain. A Nsp9 ssRNA-binding domain is found at 3858–3965 (NNEIIPGKLK…GYIGATVRLQ (108 aa)). Positions 3966-4103 (AGKQTEQAIN…CDRSIMQSTD (138 aa)) constitute an ExoN/MTase coactivator domain. The Zn(2+) site is built by C4039, C4042, H4048, C4055, C4081, C4084, C4092, and C4094. 2 zinc fingers span residues 4039–4055 (CLYC…DGFC) and 4081–4094 (CKVC…GCTC). In terms of domain architecture, NiRAN spans 4106-4355 (YLNRVRGSSA…ASECFVKSDI (250 aa)). The Nsp12 Interface domain occupies 4361–4459 (KSYDLLEYDF…WNNDLNLHSS (99 aa)). Residues H4390, C4396, C4401, C4405, and C4582 each coordinate Zn(2+). Positions 4460-5027 (RLSINELLQF…NMYEKSAVLQ (568 aa)) constitute a Nsp12 RNA-dependent RNA polymerase domain. Residues 4462–4676 (SINELLQFCS…HQKHLKSIVN (215 aa)) form a rdRp Fingers N-ter region. A rdRp Palm N-ter region spans residues 4677-4715 (TRGASVVIGTTKFYGGWDNMLKNLIDGVENPCLMGWDYP). The region spanning 4707–4869 (PCLMGWDYPK…CYNNDYASLG (163 aa)) is the RdRp catalytic domain. The interval 4716 to 4774 (KCDRALPNMIRMISAMILGSKHTTCCSSTDRFFRLCNELAQVLTEVVYSNGGFYLKPGG) is rdRp Fingers C-ter. Positions 4737, 4740, and 4741 each coordinate Zn(2+). Residues 4775-4910 (TTSGDATTAY…NKGPHEFCSQ (136 aa)) are rdRp Palm C-ter. Residues S4854, D4855, and D4856 each act as for RNA-directed RNA polymerase activity in the active site. Residues 4911–5027 (HTMQIVDKEG…NMYEKSAVLQ (117 aa)) form a rdRp Thumb region. The region spanning 5028–5140 (SAGLCVVCGS…EDFNRIATSD (113 aa)) is the CV ZBD domain. C5032, C5035, C5043, C5046, C5053, C5056, H5060, H5066, C5077, C5082, C5099, and H5102 together coordinate Zn(2+). Positions 5275–5466 (STIHKLHPAF…MCALKPDVFL (192 aa)) constitute a (+)RNA virus helicase ATP-binding domain. 5310-5317 (GPPGSGKS) is an ATP binding site. The region spanning 5467 to 5636 (HKCYRCPAEI…EGCGLFKDCS (170 aa)) is the (+)RNA virus helicase C-terminal domain. One can recognise an ExoN domain in the interval 5696-5910 (LFCTRDFAMR…RCLAIHDCFV (215 aa)). Residues D5714, E5716, and E5815 each act as for exoribonuclease activity in the active site. Positions 5831, 5833, 5849, 5852, 5880, 5884, and 5887 each coordinate Zn(2+). Residues H5891 and D5896 each act as for exoribonuclease activity in the active site. Zn(2+) is bound at residue C5902. The 222-residue stretch at 5919-6140 (YPFIGNEAVI…NLWQTFSNNL (222 aa)) folds into the N7-MTase domain. 5954 to 5960 (DIGNPKG) is a binding site for S-adenosyl-L-methionine. The gpppA-binding stretch occupies residues 6031-6045 (CNGGSLYVNNHAFHT). Zn(2+)-binding residues include C6069, C6086, C6097, and H6100. The 61-residue stretch at 6142-6202 (GLENIAFNVL…NVAFELYAKR (61 aa)) folds into the Nsp15 N-terminal oligomerization domain. Residues 6203 to 6320 (KVGLTPPITI…IYTRKNGKFE (118 aa)) enclose the AV-Nsp11N/CoV-Nsp15M domain. The 141-residue stretch at 6337 to 6477 (SPRSDMEKDF…KDHKLQTFYP (141 aa)) folds into the NendoU domain. Catalysis depends on for uridylate-specific endoribonuclease activity residues H6367, H6382, and K6423. The Nidovirus-type SAM-dependent 2'-O-MTase domain maps to 6481-6777 (ASEWKCGYSM…AICGFSNHLV (297 aa)). Active-site for 2'-O-methyltransferase residues include K6525, D6609, K6649, and E6682.

Belongs to the coronaviruses polyprotein 1ab family. Interacts with PL-PRO and nsp6. In terms of assembly, monomer. Homodimer; disulfide-linked. As to quaternary structure, interacts with nsp8 and nsp12 to form the replication-transcription complex (RTC): nsp12, nsp7, two subunits of nsp8, and up to two subunits of nsp13. Eight copies of nsp7 and eight copies of nsp8 assemble to form a heterohexadecamer dsRNA-encircling ring structure. Interacts with nsp7, nsp13 and nsp12 to form the replication-transcription complex (RTC): nsp12, nsp7, two subunits of nsp8, and up to two subunits of nsp13. Eight copies of nsp7 and eight copies of nsp8 assemble to form a heterohexadecamer dsRNA-encircling ring structure. In terms of assembly, homodimer. As to quaternary structure, forms a dodecamer and interacts with nsp14 and nsp16; these interactions enhance nsp14 and nsp16 enzymatic activities. It depends on Mn(2+) as a cofactor. In terms of processing, specific enzymatic cleavages in vivo by its own proteases yield mature proteins. 3CL-PRO and PL-PRO proteinases are autocatalytically processed.

The protein localises to the host cytoplasm. The protein resides in the host nucleus. It is found in the host membrane. It localises to the host perinuclear region. Its subcellular location is the host endoplasmic reticulum. The protein localises to the host endoplasmic reticulum-Golgi intermediate compartment. The enzyme catalyses Thiol-dependent hydrolysis of ester, thioester, amide, peptide and isopeptide bonds formed by the C-terminal Gly of ubiquitin (a 76-residue protein attached to proteins as an intracellular targeting signal).. The catalysed reaction is a 5'-end diphospho-ribonucleoside in mRNA + GTP + H(+) = a 5'-end (5'-triphosphoguanosine)-ribonucleoside in mRNA + diphosphate. It catalyses the reaction RNA(n) + a ribonucleoside 5'-triphosphate = RNA(n+1) + diphosphate. It carries out the reaction ATP + H2O = ADP + phosphate + H(+). The enzyme catalyses a 5'-end (5'-triphosphoguanosine)-ribonucleoside in mRNA + S-adenosyl-L-methionine = a 5'-end (N(7)-methyl 5'-triphosphoguanosine)-ribonucleoside in mRNA + S-adenosyl-L-homocysteine. The catalysed reaction is uridylyl-uridylyl-ribonucleotide-RNA = a 3'-end uridylyl-2',3'-cyclophospho-uridine-RNA + a 5'-end dephospho-ribonucleoside-RNA. It catalyses the reaction a 5'-end (N(7)-methyl 5'-triphosphoguanosine)-ribonucleoside in mRNA + S-adenosyl-L-methionine = a 5'-end (N(7)-methyl 5'-triphosphoguanosine)-(2'-O-methyl-ribonucleoside) in mRNA + S-adenosyl-L-homocysteine + H(+). With respect to regulation, inhibited by the substrate-analog Cbz-Val-Asn-Ser-Thr-Leu-Gln-CMK. Inhibited by (R)-16. Multifunctional protein responsible for the transcription of negative stranded RNA, leader RNA, subgenomic mRNAs and progeny virion RNA as well as proteinases responsible for the cleavage of the polyprotein into functional products. Functionally, plays a role in the inhibition of host interferon and pro-inflammatory cytokines production. Suppresses host RELA/p65 activation by blocking NFKBIA phosphorylation. Targets also the RLR pathway downstream of the IRF3 activation by targeting host CREBBP to proteasomal degradation. In terms of biological role, responsible for the cleavages located at the N-terminus of the replicase polyprotein. Participates together with nsp4 in the assembly of virally-induced cytoplasmic double-membrane vesicles necessary for viral replication. Forms a molecular pore spanning the double membrane of the coronavirus replication organelle. In addition, PLP2 possesses a deubiquitinating/deISGylating activity and processes both 'Lys-48'- and 'Lys-63'-linked polyubiquitin chains from cellular substrates. PLP2 also antagonizes innate immune induction of type I interferon by blocking the nuclear translocation of host IRF-3. Participates in the inhibition of the integrated stress response (ISR) in the infected host cell. Its function is as follows. Participates in the assembly of virally-induced cytoplasmic double-membrane vesicles necessary for viral replication. Responsible for the majority of cleavages as it cleaves the C-terminus of replicase polyprotein at 11 sites. Recognizes substrates containing the core sequence [ILMVF]-Q-|-[SGACN]. Also contains an ADP-ribose-1''-phosphate (ADRP)-binding function. Participates in the inhibition of the integrated stress response (ISR) in the infected host cell. Functionally, plays a role in the initial induction of autophagosomes from host endoplasmic reticulum. Later, limits the expansion of these phagosomes that are no longer able to deliver viral components to lysosomes. In terms of biological role, plays a role in viral RNA synthesis. Forms a hexadecamer with nsp8 (8 subunits of each) that may participate in viral replication by acting as a primase. Alternatively, may synthesize substantially longer products than oligonucleotide primers. Its function is as follows. Plays a role in viral RNA synthesis. Forms a hexadecamer with nsp7 (8 subunits of each) that may participate in viral replication by acting as a primase. Alternatively, may synthesize substantially longer products than oligonucleotide primers. Forms a primer, NSP9-pU, which is utilized by the polymerase for the initiation of RNA chains. Interacts with ribosome signal recognition particle RNA (SRP). Together with NSP8, suppress protein integration into the cell membrane, thereby disrupting host immune defenses. Functionally, plays a pivotal role in viral transcription by stimulating both nsp14 3'-5' exoribonuclease and nsp16 2'-O-methyltransferase activities. Therefore plays an essential role in viral mRNAs cap methylation. In terms of biological role, RNA-directed RNA polymerase that catalyzes the transcription of viral genomic and subgenomic RNAs. Acts in complex with nsp7 and nsp8 to transcribe both the minus and positive strands of genomic RNA. The kinase-like NiRAN domain of NSP12 attaches one or more nucleotides to the amino terminus of NSP9, forming a covalent RNA-protein intermediate that serves as transcription/replication primer. Subgenomic RNAs (sgRNAs) are formed by discontinuous transcription: The polymerase has the ability to pause at transcription-regulating sequences (TRS) and jump to the leader TRS, resulting in a major deletion. This creates a series of subgenomic RNAs that are replicated, transcribed and translated. In addition, Nsp12 is a subunit of the viral RNA capping enzyme that catalyzes the RNA guanylyltransferase reaction for genomic and sub-genomic RNAs. Subsequently, the NiRAN domain transfers RNA to GDP, and forms the core cap structure GpppA-RNA. Its function is as follows. Plays a role in viral RNA synthesis. Multi-functional protein with a zinc-binding domain in N-terminus displaying RNA and DNA duplex-unwinding activities with 5' to 3' polarity. ATPase activity is strongly stimulated by poly(U), poly(dT), poly(C), poly(dA), but not by poly(G). Plays a role in viral RNA synthesis through two distinct activities. The N7-guanine methyltransferase activity plays a role in the formation of the cap structure GpppA-RNA. The proofreading exoribonuclease reduces the sensitivity of the virus to RNA mutagens during replication. This activity acts on both ssRNA and dsRNA in a 3'-5' direction. Functionally, plays a role in viral transcription/replication and prevents the simultaneous activation of host cell dsRNA sensors, such as MDA5/IFIH1, OAS, and PKR. Acts by degrading the 5'-polyuridines generated during replication of the poly(A) region of viral genomic and subgenomic RNAs. Catalyzes a two-step reaction in which a 2'3'-cyclic phosphate (2'3'-cP) is first generated by 2'-O transesterification, which is then hydrolyzed to a 3'-phosphate (3'-P). If not degraded, poly(U) RNA would hybridize with poly(A) RNA tails and activate host dsRNA sensors. Decreases the RNA levels and thus the expression of host TBK1 and IRF3, antagonizing the host innate response. In Sus scrofa (Pig), this protein is Replicase polyprotein 1ab (rep).